Consider the following 267-residue polypeptide: Small ribosomal subunit protein uS2 (267 aa).

Positions 226 to 267 (AAAPNSASVREEEFSAESADEGKGRRAPAKKGEKKADAPAAE) are disordered. Over residues 245–267 (DEGKGRRAPAKKGEKKADAPAAE) the composition is skewed to basic and acidic residues.

Belongs to the universal ribosomal protein uS2 family.

The chain is Small ribosomal subunit protein uS2 from Xanthomonas oryzae pv. oryzae (strain MAFF 311018).